A 133-amino-acid polypeptide reads, in one-letter code: Histone H2A (133 aa).

The segment covering 1–10 (MTGGKSGGKA) has biased composition (gly residues). A disordered region spans residues 1 to 25 (MTGGKSGGKASGSKSSQSRSSKAGL). Residues lysine 5 and lysine 9 each carry the N6-acetyllysine modification. Low complexity predominate over residues 11 to 24 (SGSKSSQSRSSKAG). N5-methylglutamine is present on glutamine 106. Serine 130 carries the post-translational modification Phosphoserine. The [ST]-Q motif signature appears at 130 to 131 (SQ).

This sequence belongs to the histone H2A family. In terms of assembly, the nucleosome is a histone octamer containing two molecules each of H2A, H2B, H3 and H4 assembled in one H3-H4 heterotetramer and two H2A-H2B heterodimers. The octamer wraps approximately 147 bp of DNA. Post-translationally, phosphorylated to form H2AS128ph (gamma-H2A) in response to DNA double-strand breaks (DSBs) generated by exogenous genotoxic agents and by stalled replication forks. Phosphorylation is dependent on the DNA damage checkpoint kinases MEC1/ATR and TEL1/ATM, spreads on either side of a detected DSB site and may mark the surrounding chromatin for recruitment of proteins required for DNA damage signaling and repair. Gamma-H2A is removed from the DNA prior to the strand invasion-primer extension step of the repair process and subsequently dephosphorylated. Dephosphorylation is necessary for efficient recovery from the DNA damage checkpoint. Acetylated by ESA1 to form H2AK4ac and H2AK7ac.

Its subcellular location is the nucleus. It is found in the chromosome. Functionally, core component of nucleosome which plays a central role in DNA double strand break (DSB) repair. Nucleosomes wrap and compact DNA into chromatin, limiting DNA accessibility to the cellular machineries which require DNA as a template. Histones thereby play a central role in transcription regulation, DNA repair, DNA replication and chromosomal stability. DNA accessibility is regulated via a complex set of post-translational modifications of histones, also called histone code, and nucleosome remodeling. In Coccidioides immitis (strain RS) (Valley fever fungus), this protein is Histone H2A (HTA1).